A 214-amino-acid chain; its full sequence is Thymidylate kinase (214 aa).

ATP is bound at residue 12 to 19; it reads GLDGSGKS.

This sequence belongs to the thymidylate kinase family.

The catalysed reaction is dTMP + ATP = dTDP + ADP. Its function is as follows. Phosphorylation of dTMP to form dTDP in both de novo and salvage pathways of dTTP synthesis. This Bdellovibrio bacteriovorus (strain ATCC 15356 / DSM 50701 / NCIMB 9529 / HD100) protein is Thymidylate kinase.